The following is a 62-amino-acid chain: uncharacterized protein (62 aa).

The segment covering 1-18 has biased composition (polar residues); the sequence is MTTNRVDPLEQTSPNTPT. Residues 1–24 are disordered; that stretch reads MTTNRVDPLEQTSPNTPTSKREKA.

This is an uncharacterized protein from Rickettsia conorii (strain ATCC VR-613 / Malish 7).